We begin with the raw amino-acid sequence, 1101 residues long: Cytospin-A (1101 aa).

2 disordered regions span residues 1 to 170 (MRKA…NQIS) and 280 to 366 (SDCG…SGNA). Composition is skewed to polar residues over residues 29–48 (ESSAPTASKVSRPGSSLSKA) and 64–86 (ASNSVKVKKNSTTSYPNSGTAMS). The span at 93–110 (RSSAGSSSNTKRSGSSGA) shows a compositional bias: low complexity. Composition is skewed to basic and acidic residues over residues 114–125 (GSSRERLRERSR) and 151–165 (GRTDSDMIRMSKSKS). Residues 162 to 254 (KSKSDNQISD…LKDRLNALGF (93 aa)) adopt a coiled-coil conformation. The segment covering 333 to 355 (LTSSDDALDAPSSSSESEGLPST) has biased composition (low complexity). Coiled-coil stretches lie at residues 373 to 427 (CLTE…MDSL) and 492 to 785 (QHLS…RGRV). Positions 923 to 978 (SISVSRRSSEELKRDISVPDGSSAPSLMVMTSPSPQLSLSSSSPTASVTPTARSRI) are disordered. The segment covering 929–939 (RSSEELKRDIS) has biased composition (basic and acidic residues). Over residues 953–975 (TSPSPQLSLSSSSPTASVTPTAR) the composition is skewed to low complexity. The region spanning 995–1100 (GSKRNALLKW…YVTSIYKYFE (106 aa)) is the Calponin-homology (CH) domain.

Belongs to the cytospin-A family. In terms of assembly, may interact with both microtubules and actin cytoskeleton.

The protein localises to the cytoplasm. The protein resides in the cytoskeleton. It localises to the spindle. Its subcellular location is the cell junction. It is found in the gap junction. In terms of biological role, involved in cytokinesis and spindle organization. May play a role in actin cytoskeleton organization and microtubule stabilization and hence required for proper cell adhesion and migration. The protein is Cytospin-A (specc1l) of Xenopus tropicalis (Western clawed frog).